The sequence spans 436 residues: Voltage-gated purine nucleotide uniporter SLC17A9 (436 aa).

The next 10 membrane-spanning stretches (helical) occupy residues 64-84 (IVLS…GHLG), 92-112 (VILL…LLAH), 118-138 (LAFM…YFPA), 158-178 (IVGA…SLLL), 181-201 (YGWQ…VWYV), 239-259 (PAVW…FILL), 276-296 (WIFN…SGFL), 316-336 (GMGL…SSFC), 369-389 (GFLF…GVCL), and 402-422 (CLFN…LVFG).

It belongs to the major facilitator superfamily. Sodium/anion cotransporter family. As to expression, widely expressed, but more predominantly in adrenal gland, brain and thyroid.

The protein localises to the cytoplasmic vesicle. It is found in the secretory vesicle. It localises to the chromaffin granule membrane. Its subcellular location is the secretory vesicle membrane. The protein resides in the lysosome membrane. It carries out the reaction ATP(in) = ATP(out). It catalyses the reaction ADP(in) = ADP(out). The enzyme catalyses GTP(in) = GTP(out). With respect to regulation, activity is chloride-dependent. Inhibited by AMP-PNP, gammaS-ATP, diadenosine triphosphate, 4,4'- diisothiocyanatostilbene-2,2'-disulfonate (DIDS) and Evans blue. Its function is as follows. Voltage-gated ATP nucleotide uniporter that can also transport the purine nucleotides ADP and GTP. Uses the membrane potential as the driving force to control ATP accumulation in lysosomes and secretory vesicles. By controlling ATP storage in lysosomes, regulates ATP-dependent proteins of these organelles. Also indirectly regulates the exocytosis of ATP through its import into lysosomes in astrocytes and secretory vesicles such as adrenal chromaffin granules, mucin granules and synaptic vesicles. The polypeptide is Voltage-gated purine nucleotide uniporter SLC17A9 (Homo sapiens (Human)).